Here is a 447-residue protein sequence, read N- to C-terminus: MEVAMTDLFTYIKDKNIAIDLNSKWFQELWYPLSKKTGSIITTRLLEWMGYSGEYKLQRQNFKRLLDNNNIPYEEIYHNDDRFLEHPSMIYEIEQTDKKQIKQKRWITLEMRNFKKAILRLNTKNAEVIRDYYLNLEEACFDYAEYQVNWLRKKSDLERSINEDKLNQSMLLLAIKDEELESEKEKGIQTRSMLKKVEEEKIKIENEKEKALRKMLRLKEITITQKERTITQLIYISTSVSYAAQHRFKVGGVEGRRRLRGRLSDYNGRSASGDEWYFCHLIDVADFRKAEGRIEDIIGKFRDKKDKEIYIMPYRKLLKVIELICQNYTIEVSTLNAMLKDIVDEFEDDAVPLIPDAIPQSTFKITRVEFGKNVDTTIIQGKATKAQLIKEFEKYIQTLSVDENEINRKELFDDLSRLYNFNRNDAWVWLKEFIESQEEKTFILKYR.

Residues 188–221 (IQTRSMLKKVEEEKIKIENEKEKALRKMLRLKEI) are a coiled coil.

This is Putative MSV199 domain-containing protein 420R from Acheta domesticus (House cricket).